The chain runs to 204 residues: Large ribosomal subunit protein eL15z (204 aa).

Belongs to the eukaryotic ribosomal protein eL15 family.

In Picea mariana (Black spruce), this protein is Large ribosomal subunit protein eL15z (SB61).